The primary structure comprises 506 residues: Histidine ammonia-lyase (506 aa).

A cross-link (5-imidazolinone (Ala-Gly)) is located at residues 143-145; sequence ASG. Position 144 is a 2,3-didehydroalanine (Ser) (S144).

Belongs to the PAL/histidase family. Contains an active site 4-methylidene-imidazol-5-one (MIO), which is formed autocatalytically by cyclization and dehydration of residues Ala-Ser-Gly.

The protein resides in the cytoplasm. The enzyme catalyses L-histidine = trans-urocanate + NH4(+). It functions in the pathway amino-acid degradation; L-histidine degradation into L-glutamate; N-formimidoyl-L-glutamate from L-histidine: step 1/3. The chain is Histidine ammonia-lyase from Salmonella paratyphi C (strain RKS4594).